Consider the following 336-residue polypeptide: MEIKQKKVWLSLIVLYAITTSVLGDFGEPLLKGFYKESCPLAEEIVKHNIEVAVLKDPRMAASLLRLQFHDCFVLGCDASVLLDTHGDMLSEKQATPNLNSLRGFEVIDYIKYLLEEACPLTVSCSDILALAARDSVFLRGGPWWEVLLGRRDSLKASFAGANQFIPAPNSSLDSLIINFKQQGLNIQDLIALSGAHTIGKARCVSFKQRIVQPNMEQTFYVDEFRRHSTFRRVLGSQCKDSSRDNELSPLDIKTPAYFDNHYFINLLEGRGLLISDNVLVSEDHEGEIFQKVWEYAVNQDLFFIDFVESMLKMGNINVLTGIEGEIRENCRFVNI.

The first 24 residues, 1-24 (MEIKQKKVWLSLIVLYAITTSVLG), serve as a signal peptide directing secretion. 4 disulfide bridges follow: cysteine 39-cysteine 119, cysteine 72-cysteine 77, cysteine 125-cysteine 331, and cysteine 204-cysteine 239. Histidine 70 serves as the catalytic Proton acceptor. Aspartate 71, valine 74, glycine 76, aspartate 78, and serine 80 together coordinate Ca(2+). Proline 167 serves as a coordination point for substrate. An N-linked (GlcNAc...) asparagine glycan is attached at asparagine 170. Histidine 197 is a binding site for heme b. Threonine 198 is a binding site for Ca(2+). Ca(2+) is bound by residues aspartate 252, threonine 255, and aspartate 260.

It belongs to the peroxidase family. Classical plant (class III) peroxidase subfamily. Heme b serves as cofactor. Requires Ca(2+) as cofactor.

The protein localises to the secreted. It carries out the reaction 2 a phenolic donor + H2O2 = 2 a phenolic radical donor + 2 H2O. Removal of H(2)O(2), oxidation of toxic reductants, biosynthesis and degradation of lignin, suberization, auxin catabolism, response to environmental stresses such as wounding, pathogen attack and oxidative stress. These functions might be dependent on each isozyme/isoform in each plant tissue. Functionally, may be implicated in the systemic acquired resistance response via the salicylic acid signal transduction pathway. The protein is Peroxidase 20 (PER20) of Arabidopsis thaliana (Mouse-ear cress).